We begin with the raw amino-acid sequence, 359 residues long: Mannonate dehydratase (359 aa).

Belongs to the mannonate dehydratase family. Fe(2+) is required as a cofactor. Requires Mn(2+) as cofactor.

The catalysed reaction is D-mannonate = 2-dehydro-3-deoxy-D-gluconate + H2O. It participates in carbohydrate metabolism; pentose and glucuronate interconversion. Catalyzes the dehydration of D-mannonate. The sequence is that of Mannonate dehydratase (uxuA) from Bacillus subtilis (strain 168).